The primary structure comprises 83 residues: NAD(P)H-quinone oxidoreductase subunit L (83 aa).

2 helical membrane-spanning segments follow: residues 15 to 35 (LMVL…VPLL) and 53 to 73 (LSAY…APFL).

Belongs to the complex I NdhL subunit family. In terms of assembly, NDH-1 can be composed of about 15 different subunits; different subcomplexes with different compositions have been identified which probably have different functions.

It localises to the cellular thylakoid membrane. The enzyme catalyses a plastoquinone + NADH + (n+1) H(+)(in) = a plastoquinol + NAD(+) + n H(+)(out). The catalysed reaction is a plastoquinone + NADPH + (n+1) H(+)(in) = a plastoquinol + NADP(+) + n H(+)(out). NDH-1 shuttles electrons from an unknown electron donor, via FMN and iron-sulfur (Fe-S) centers, to quinones in the respiratory and/or the photosynthetic chain. The immediate electron acceptor for the enzyme in this species is believed to be plastoquinone. Couples the redox reaction to proton translocation, and thus conserves the redox energy in a proton gradient. Cyanobacterial NDH-1 also plays a role in inorganic carbon-concentration. The sequence is that of NAD(P)H-quinone oxidoreductase subunit L from Prochlorococcus marinus (strain MIT 9303).